The following is a 338-amino-acid chain: Heme A synthase (338 aa).

Helical transmembrane passes span 6–26, 93–113, 118–138, 154–174, and 201–221; these read ITKW…IGGI, GRIT…KGII, IAPY…GWYM, LAFH…QLIK, and VIYL…GLIY. H256 is a heme binding site. A run of 3 helical transmembrane segments spans residues 258–278, 285–305, and 308–328; these read LGGY…LKIE, IAYF…ITLL, and VPII…SVII. Position 316 (H316) interacts with heme.

Belongs to the COX15/CtaA family. Type 2 subfamily. In terms of assembly, interacts with CtaB. Heme b is required as a cofactor.

The protein resides in the cell membrane. The enzyme catalyses Fe(II)-heme o + 2 A + H2O = Fe(II)-heme a + 2 AH2. Its pathway is porphyrin-containing compound metabolism; heme A biosynthesis; heme A from heme O: step 1/1. Its function is as follows. Catalyzes the conversion of heme O to heme A by two successive hydroxylations of the methyl group at C8. The first hydroxylation forms heme I, the second hydroxylation results in an unstable dihydroxymethyl group, which spontaneously dehydrates, resulting in the formyl group of heme A. The protein is Heme A synthase of Rickettsia canadensis (strain McKiel).